Consider the following 80-residue polypeptide: Exodeoxyribonuclease 7 small subunit (80 aa).

It belongs to the XseB family. As to quaternary structure, heterooligomer composed of large and small subunits.

It is found in the cytoplasm. It catalyses the reaction Exonucleolytic cleavage in either 5'- to 3'- or 3'- to 5'-direction to yield nucleoside 5'-phosphates.. Functionally, bidirectionally degrades single-stranded DNA into large acid-insoluble oligonucleotides, which are then degraded further into small acid-soluble oligonucleotides. This chain is Exodeoxyribonuclease 7 small subunit, found in Vibrio cholerae serotype O1 (strain ATCC 39541 / Classical Ogawa 395 / O395).